Reading from the N-terminus, the 482-residue chain is Solute carrier family 49 member A3 (482 aa).

A run of 12 helical transmembrane segments spans residues 41–61, 81–101, 109–129, 150–170, 181–201, 206–226, 264–284, 296–316, 330–350, 355–375, 390–410, and 437–457; these read WFVLGVICLLSCTNAMLWISF, YLSLVYLIIAIPVGFGASWLI, AIVFSSWLNMIGSIIRCGAIV, LCAIAQPLVLFVPAKLASVWF, IASMSNPLGVLLANIISPSVV, YIAHMLGIYTVPAIAACILAT, VILMLCFGAGIGIFTAISSFL, LFAGVCGALFIFFGFIGAFVC, VKTCFALTALTSIAFALVINF, VLVACVCSLLGLFGFAISPVG, SSTGLAFISGQIQGIIYMILF, and TSMLVMAALCSFGSCIFIIFF.

Belongs to the major facilitator superfamily.

The protein localises to the membrane. In Xenopus tropicalis (Western clawed frog), this protein is Solute carrier family 49 member A3 (slc49a3).